A 275-amino-acid chain; its full sequence is Large ribosomal subunit protein uL2c (275 aa).

Disordered stretches follow at residues Ser-32–His-53 and Pro-218–Gly-242.

The protein belongs to the universal ribosomal protein uL2 family. As to quaternary structure, part of the 50S ribosomal subunit.

The protein localises to the plastid. The protein resides in the chloroplast. This Tetradesmus obliquus (Green alga) protein is Large ribosomal subunit protein uL2c (rpl2).